The following is a 441-amino-acid chain: Trigger factor (441 aa).

In terms of domain architecture, PPIase FKBP-type spans 161 to 246 (GDQVTIDFVG…VSEVAEQILP (86 aa)).

The protein belongs to the FKBP-type PPIase family. Tig subfamily.

It localises to the cytoplasm. It catalyses the reaction [protein]-peptidylproline (omega=180) = [protein]-peptidylproline (omega=0). Its function is as follows. Involved in protein export. Acts as a chaperone by maintaining the newly synthesized protein in an open conformation. Functions as a peptidyl-prolyl cis-trans isomerase. The polypeptide is Trigger factor (Marinomonas sp. (strain MWYL1)).